Consider the following 340-residue polypeptide: Protein pelota homolog (340 aa).

This sequence belongs to the eukaryotic release factor 1 family. Pelota subfamily. In terms of assembly, monomer. The cofactor is a divalent metal cation.

It is found in the cytoplasm. Functionally, may function in recognizing stalled ribosomes, interact with stem-loop structures in stalled mRNA molecules, and effect endonucleolytic cleavage of the mRNA. May play a role in the release non-functional ribosomes and degradation of damaged mRNAs. Has endoribonuclease activity. The chain is Protein pelota homolog from Methanosphaerula palustris (strain ATCC BAA-1556 / DSM 19958 / E1-9c).